The sequence spans 255 residues: DASH complex subunit SPC34 (255 aa).

The segment at 53–81 (LFSVPPPPPRQTTLTAEQQQQQKPSNRRQ) is disordered. Over residues 63-81 (QTTLTAEQQQQQKPSNRRQ) the composition is skewed to polar residues. Positions 176–248 (LAYYEAKIAE…QARLRALDAD (73 aa)) form a coiled coil.

This sequence belongs to the DASH complex SPC34 family. Component of the DASH complex consisting of ASK1, DAD1, DAD2, DAD3, DAD4, DAM1, DUO1, HSK3, SPC19 and SPC34, with a stoichiometry of one copy of each subunit per complex. Multiple DASH complexes oligomerize to form a ring that encircles spindle microtubules and organizes the rod-like NDC80 complexes of the outer kinetochore of the outer kinetochore. DASH complex oligomerization strengthens microtubule attachments. On cytoplasmic microtubules, DASH complexes appear to form patches instead of rings.

It is found in the nucleus. It localises to the cytoplasm. The protein localises to the cytoskeleton. Its subcellular location is the spindle. The protein resides in the chromosome. It is found in the centromere. It localises to the kinetochore. Component of the DASH complex that connects microtubules with kinetochores and couples microtubule depolymerisation to chromosome movement; it is involved in retrieving kinetochores to the spindle poles before their re-orientation on the spindle in early mitosis and allows microtubule depolymerization to pull chromosomes apart and resist detachment during anaphase. Kinetochores, consisting of a centromere-associated inner segment and a microtubule-contacting outer segment, play a crucial role in chromosome segregation by mediating the physical connection between centromeric DNA and microtubules. Kinetochores also serve as an input point for the spindle assembly checkpoint, which delays anaphase until all chromosomes have bioriented on the mitotic spindle. The chain is DASH complex subunit SPC34 from Chaetomium thermophilum (strain DSM 1495 / CBS 144.50 / IMI 039719) (Thermochaetoides thermophila).